The following is a 113-amino-acid chain: Carboxysome shell protein CcmK4 (113 aa).

A BMC domain is found at 5–91 (AIGSLETKGF…PHENVEAVFP (87 aa)).

This sequence belongs to the bacterial microcompartments protein family. CcmK subfamily. In terms of assembly, homohexamer. Interacts stably with CcmK3, probably forms heterohexamers with a 1:2 CcmK3:CcmK4 stoichiometry.

The protein resides in the carboxysome. Functionally, one of the shell proteins of the carboxysome, a polyhedral inclusion where RuBisCO (ribulose bisphosphate carboxylase, rbcL-rbcS) is sequestered. Assembles into hexamers which make sheets that form the facets of the polyhedral carboxysome. The hexamer central pore probably regulates metabolite flux. Its function is as follows. A minor shell protein of the carboxysome, a polyhedral inclusion where RuBisCO (ribulose bisphosphate carboxylase, rbcL-rbcS) is sequestered. Hexamers form sheets that form the facets of the polyhedral carboxysome. The shell is 4.5 nm thick, as observed for CcmK proteins. In PCC 7942 there are several CcmK paralogs with presumably functional differences; replacing the central pore residues (34-37) with those of CcmK2 from this organism (Tyr-Glu-Lys-Ile) allows the bacterium to make carboxysomes, but the expression level is too low to know if the carboxysome is functional for CO(2) fixation. This subunit probably makes both homohexamers and heterohexamers with CcmK3. The CcmK3-CcmK4 heterohexmers have been suggested to cap other hexamers, perhaps to alter metabolite flux. The chain is Carboxysome shell protein CcmK4 from Synechococcus elongatus (strain ATCC 33912 / PCC 7942 / FACHB-805) (Anacystis nidulans R2).